Here is a 138-residue protein sequence, read N- to C-terminus: Gonadotropin subunit beta-2 (138 aa).

The signal sequence occupies residues 1–21; that stretch reads MPASSYFLLFFFMNFFSPAQS. Intrachain disulfides connect cysteine 27–cysteine 75, cysteine 41–cysteine 90, cysteine 44–cysteine 128, cysteine 52–cysteine 106, cysteine 56–cysteine 108, and cysteine 111–cysteine 118. N-linked (GlcNAc...) asparagine glycosylation is present at asparagine 31.

This sequence belongs to the glycoprotein hormones subunit beta family. In terms of assembly, heterodimer of an alpha and a beta chain.

The protein resides in the secreted. In terms of biological role, involved in gametogenesis and steroidogenesis. This chain is Gonadotropin subunit beta-2 (cgbb), found in Clarias gariepinus (North African catfish).